Here is a 384-residue protein sequence, read N- to C-terminus: Small ribosomal subunit protein mS31 (384 aa).

The transit peptide at 1–54 directs the protein to the mitochondrion; the sequence is MLHRIPAFLRPRPFSGLPLSCGNRDVSVAVLPAAQSGAVRTENNIQRHFCTSRS. The segment at 101-136 is disordered; it reads TANVKTPKPRGRKPSASLEATVDRLQKAPEDPPKKR. A compositionally biased stretch (basic and acidic residues) spans 121-136; that stretch reads TVDRLQKAPEDPPKKR.

It belongs to the mitochondrion-specific ribosomal protein mS31 family. Component of the mitochondrial ribosome small subunit (28S) which comprises a 12S rRNA and about 30 distinct proteins.

Its subcellular location is the mitochondrion. The sequence is that of Small ribosomal subunit protein mS31 (Mrps31) from Mus musculus (Mouse).